Consider the following 507-residue polypeptide: Chromosomal replication initiator protein DnaA (507 aa).

Positions 1-112 are domain I, interacts with DnaA modulators; the sequence is MTDDPGSGFT…PATDEADDTT (112 aa). The segment at 99 to 162 is disordered; sequence RIAPPATDEA…ERPRNTDSAT (64 aa). Residues 113-127 are compositionally biased toward polar residues; the sequence is VPPSENPATTSPDTT. The tract at residues 113–166 is domain II; the sequence is VPPSENPATTSPDTTTDNDEIDDSAAARGDNQHSWPSYFTERPRNTDSATAGVT. Residues 167-383 form a domain III, AAA+ region region; that stretch reads SLNRRYTFDT…GALIRVTAFA (217 aa). 4 residues coordinate ATP: Gly-211, Gly-213, Lys-214, and Thr-215. A domain IV, binds dsDNA region spans residues 384-507; it reads SLNKTPIDKA…TTRIRQRSKR (124 aa).

Belongs to the DnaA family. Oligomerizes as a right-handed, spiral filament on DNA at oriC.

The protein resides in the cytoplasm. Plays an essential role in the initiation and regulation of chromosomal replication. ATP-DnaA binds to the origin of replication (oriC) to initiate formation of the DNA replication initiation complex once per cell cycle. Binds the DnaA box (a 9 base pair repeat at the origin) and separates the double-stranded (ds)DNA. Forms a right-handed helical filament on oriC DNA; dsDNA binds to the exterior of the filament while single-stranded (ss)DNA is stabiized in the filament's interior. The ATP-DnaA-oriC complex binds and stabilizes one strand of the AT-rich DNA unwinding element (DUE), permitting loading of DNA polymerase. After initiation quickly degrades to an ADP-DnaA complex that is not apt for DNA replication. Binds acidic phospholipids. In Mycobacterium bovis (strain ATCC BAA-935 / AF2122/97), this protein is Chromosomal replication initiator protein DnaA.